A 165-amino-acid polypeptide reads, in one-letter code: CDP-archaeol synthase (165 aa).

Transmembrane regions (helical) follow at residues 4–24, 78–98, and 118–138; these read IVQL…AVLA, LLDA…GAFV, and FLLM…PLLL.

It belongs to the CDP-archaeol synthase family. Mg(2+) is required as a cofactor.

It is found in the cell membrane. It carries out the reaction 2,3-bis-O-(geranylgeranyl)-sn-glycerol 1-phosphate + CTP + H(+) = CDP-2,3-bis-O-(geranylgeranyl)-sn-glycerol + diphosphate. Its pathway is membrane lipid metabolism; glycerophospholipid metabolism. Catalyzes the formation of CDP-2,3-bis-(O-geranylgeranyl)-sn-glycerol (CDP-archaeol) from 2,3-bis-(O-geranylgeranyl)-sn-glycerol 1-phosphate (DGGGP) and CTP. This reaction is the third ether-bond-formation step in the biosynthesis of archaeal membrane lipids. The polypeptide is CDP-archaeol synthase (Pyrobaculum calidifontis (strain DSM 21063 / JCM 11548 / VA1)).